The sequence spans 108 residues: Large ribosomal subunit protein bL21 (108 aa).

It belongs to the bacterial ribosomal protein bL21 family. As to quaternary structure, part of the 50S ribosomal subunit. Contacts protein L20.

Its function is as follows. This protein binds to 23S rRNA in the presence of protein L20. The polypeptide is Large ribosomal subunit protein bL21 (Acidobacterium capsulatum (strain ATCC 51196 / DSM 11244 / BCRC 80197 / JCM 7670 / NBRC 15755 / NCIMB 13165 / 161)).